A 146-amino-acid chain; its full sequence is Large-conductance mechanosensitive channel (146 aa).

2 helical membrane passes run V15–V35 and G81–I101.

The protein belongs to the MscL family. Homopentamer.

The protein resides in the cell membrane. Functionally, channel that opens in response to stretch forces in the membrane lipid bilayer. May participate in the regulation of osmotic pressure changes within the cell. The sequence is that of Large-conductance mechanosensitive channel from Clostridium beijerinckii (strain ATCC 51743 / NCIMB 8052) (Clostridium acetobutylicum).